The primary structure comprises 277 residues: Serine protease 33 (277 aa).

Residues Met-1–Ala-24 form the signal peptide. One can recognise a Peptidase S1 domain in the interval Ile-34–Ser-276. A disulfide bridge links Cys-59 with Cys-75. Residues His-74 and Asp-123 each act as charge relay system in the active site. Cystine bridges form between Cys-157–Cys-234, Cys-190–Cys-213, and Cys-224–Cys-252. The Charge relay system role is filled by Ser-228.

The protein belongs to the peptidase S1 family. In terms of processing, not glycosylated. As to expression, widely expressed.

The protein resides in the secreted. Functionally, serine protease that has amidolytic activity, cleaving its substrates before Arg residues. The sequence is that of Serine protease 33 (Prss33) from Mus musculus (Mouse).